Reading from the N-terminus, the 167-residue chain is Peptidyl-prolyl cis-trans isomerase-like 3 (167 aa).

One can recognise a PPIase cyclophilin-type domain in the interval 1–153 (MSVTLHTNLG…QEIKLLNVTV (153 aa)).

This sequence belongs to the cyclophilin-type PPIase family. PPIL3 subfamily.

It carries out the reaction [protein]-peptidylproline (omega=180) = [protein]-peptidylproline (omega=0). PPIases accelerate the folding of proteins. It catalyzes the cis-trans isomerization of proline imidic peptide bonds in oligopeptides. The chain is Peptidyl-prolyl cis-trans isomerase-like 3 (CYP10) from Cryptococcus neoformans var. neoformans serotype D (strain B-3501A) (Filobasidiella neoformans).